Consider the following 396-residue polypeptide: MPHFLASHITLPPMPFTQEGYTFVYEAKQCNDSSQSLILVRYEDNEFFLRKAWRGNKNNAILKCEKSTKTQPTGIIKNALKILCAYQKNVISHNLNKNTPRQNLQSPYFQSMDFFLDFAKPCLIEIGFGSGRHLLHLAQSNPHFMCIGIEIHTPSIEQILRQVQLLGLENLYIINGDARILLEILSSHIAQGIYVHFPVPWNKKHHRRIFSPKFFQESLRVLDNNGVLHLRSDDEIYFQDALSLALQQESISLEIHKNQQEVITSKYEARWKKQQKNIYDLKIFHTYKNTNNEKNVKNTQKNFYFDKILRKNLDNYKNFPHKKIANDWFLHIDNLYCAGDIYVLALCFGDFNQPQSKFLQIEFCNNVSARYIGSNPIPTQAAIKAHKYLIQILTQE.

The S-adenosyl-L-methionine site is built by Glu-125, Glu-150, and Asp-177. Residues Lys-203 and Asp-233 each contribute to the substrate site.

This sequence belongs to the class I-like SAM-binding methyltransferase superfamily. TrmB family.

It carries out the reaction guanosine(46) in tRNA + S-adenosyl-L-methionine = N(7)-methylguanosine(46) in tRNA + S-adenosyl-L-homocysteine. It functions in the pathway tRNA modification; N(7)-methylguanine-tRNA biosynthesis. In terms of biological role, catalyzes the formation of N(7)-methylguanine at position 46 (m7G46) in tRNA. The sequence is that of tRNA (guanine-N(7)-)-methyltransferase from Helicobacter hepaticus (strain ATCC 51449 / 3B1).